Consider the following 305-residue polypeptide: Ribonuclease BN (305 aa).

His-64, His-66, Asp-68, His-69, His-141, Asp-212, and His-270 together coordinate Zn(2+). Residue Asp-68 is the Proton acceptor of the active site.

The protein belongs to the RNase Z family. RNase BN subfamily. In terms of assembly, homodimer. The cofactor is Zn(2+).

In terms of biological role, zinc phosphodiesterase, which has both exoribonuclease and endoribonuclease activities. In Salmonella gallinarum (strain 287/91 / NCTC 13346), this protein is Ribonuclease BN.